We begin with the raw amino-acid sequence, 580 residues long: Acyl-coenzyme A synthetase ACSM3, mitochondrial (580 aa).

The N-terminal 21 residues, M1 to V21, are a transit peptide targeting the mitochondrion. K67 and K100 each carry N6-succinyllysine. Residue K151 is modified to N6-acetyllysine. ATP is bound by residues T229–K237, E368–T373, D455, R470, and K566.

Belongs to the ATP-dependent AMP-binding enzyme family. Mg(2+) serves as cofactor. It depends on Mn(2+) as a cofactor. As to expression, detected in kidney (at protein level). Detected in kidney proximal tubules and in liver. Detected at low levels in testis, stomach, heart and lung.

The protein resides in the mitochondrion. It localises to the mitochondrion matrix. It carries out the reaction a medium-chain fatty acid + ATP + CoA = a medium-chain fatty acyl-CoA + AMP + diphosphate. The enzyme catalyses propanoate + ATP + CoA = propanoyl-CoA + AMP + diphosphate. The catalysed reaction is butanoate + ATP + CoA = butanoyl-CoA + AMP + diphosphate. It catalyses the reaction 2-methylpropanoate + ATP + CoA = 2-methylpropanoyl-CoA + AMP + diphosphate. It carries out the reaction 2-methylbutanoate + ATP + CoA = 2-methylbutanoyl-CoA + AMP + diphosphate. The enzyme catalyses octanoate + ATP + CoA = octanoyl-CoA + AMP + diphosphate. Functionally, catalyzes the activation of fatty acids by CoA to produce an acyl-CoA, the first step in fatty acid metabolism. Capable of activating medium-chain fatty acids with a preference for isobutyrate among fatty acids with 2-6 carbon atoms. The protein is Acyl-coenzyme A synthetase ACSM3, mitochondrial (Acsm3) of Mus musculus (Mouse).